The primary structure comprises 225 residues: Cytidylate kinase (225 aa).

10 to 18 (GPASSGKST) is an ATP binding site.

Belongs to the cytidylate kinase family. Type 1 subfamily.

It is found in the cytoplasm. The catalysed reaction is CMP + ATP = CDP + ADP. It catalyses the reaction dCMP + ATP = dCDP + ADP. The polypeptide is Cytidylate kinase (Streptococcus sanguinis (strain SK36)).